Reading from the N-terminus, the 662-residue chain is Glutathione hydrolase 7 (662 aa).

At 1 to 106 the chain is on the cytoplasmic side; sequence MAAENEASQE…AAECSCRQDG (106 aa). A phosphoserine mark is found at Ser-17, Ser-72, Ser-79, and Ser-83. The tract at residues 26–90 is disordered; sequence SFPRLPEDEP…DGSPLRETRK (65 aa). Residues 72 to 83 are compositionally biased toward low complexity; it reads SSSSEMGSQDGS. Residues 107 to 127 traverse the membrane as a helical; Signal-anchor for type II membrane protein segment; sequence LTVIVTACLTFATGVTVALVM. The Extracellular segment spans residues 128 to 662; the sequence is QIYFGDPQIF…SPDAAGATIL (535 aa). N-linked (GlcNAc...) asparagine glycosylation is found at Asn-198, Asn-267, Asn-283, Asn-330, Asn-353, Asn-394, Asn-452, Asn-519, Asn-523, and Asn-586.

The protein belongs to the gamma-glutamyltransferase family. As to quaternary structure, interacts with TLCD3A. In terms of assembly, heterodimer composed of the light and heavy chains. The active site is located in the light chain. Post-translationally, cleaved by autocatalysis into a large and a small subunit and the autocatalytic cleavage is essential to the functional activation of the enzyme. Widely expressed, but at low level, except in the airway epithelial cells. Detected in brain, heart, kidney, liver, lung, spleen, testis and trachea.

It is found in the membrane. It catalyses the reaction an N-terminal (5-L-glutamyl)-[peptide] + an alpha-amino acid = 5-L-glutamyl amino acid + an N-terminal L-alpha-aminoacyl-[peptide]. It carries out the reaction glutathione + H2O = L-cysteinylglycine + L-glutamate. The catalysed reaction is an S-substituted glutathione + H2O = an S-substituted L-cysteinylglycine + L-glutamate. It participates in sulfur metabolism; glutathione metabolism. Its function is as follows. Hydrolyzes and transfers gamma-glutamyl moieties from glutathione and other gamma-glutamyl compounds to acceptors. This is Glutathione hydrolase 7 from Homo sapiens (Human).